We begin with the raw amino-acid sequence, 700 residues long: Lutropin-choriogonadotropic hormone receptor (700 aa).

Positions 1 to 26 (MGRRVPALRQLLVLAMLVLKQSQLHS) are cleaved as a signal peptide. Residues 27-362 (PELSGSRCPE…AFNPCEDIMG (336 aa)) lie on the Extracellular side of the membrane. An LRR 1 repeat occupies 52-75 (RAGLARLSLTYLPVKVIPSQAFRG). N-linked (GlcNAc...) asparagine glycosylation occurs at N103. 3 LRR repeats span residues 126 to 150 (LPRLKYLSICNTGIRTLPDVSKISS), 176 to 200 (MNNESITLKLYGNGFEEVQSHAFNG), and 225 to 248 (ATGPSILDVSSTKLQALPSHGLES). Residues N178 and N199 are each glycosylated (N-linked (GlcNAc...) asparagine). N-linked (GlcNAc...) asparagine glycans are attached at residues N295, N303, and N317. Y335 is subject to Sulfotyrosine. Residues 363 to 390 (YAFLRVLIWLINILAIFGNLTVLFVLLT) traverse the membrane as a helical segment. The Cytoplasmic segment spans residues 391-399 (SRYKLTVPR). A helical membrane pass occupies residues 400–422 (FLMCNLSFADFCMGLYLLLIASV). Over 423-443 (DSQTKGQYYNHAIDWQTGSGC) the chain is Extracellular. A disulfide bridge links C443 with C518. Residues 444 to 466 (SAAGFFTVFASELSVYTLTVITL) traverse the membrane as a helical segment. Residues 467-486 (ERWHTITYAVQLDQKLRLRH) are Cytoplasmic-facing. Residues 487-509 (AIPIMLGGWIFSTLMATLPLVGV) form a helical membrane-spanning segment. The Extracellular portion of the chain corresponds to 510–529 (SSYMKVSICLPMDVESTLSQ). The chain crosses the membrane as a helical span at residues 530–551 (VYILSILLLNAVAFVVICACYV). Over 552–574 (RIYFAVQNPELTAPNKDTKIAKK) the chain is Cytoplasmic. A helical membrane pass occupies residues 575–598 (MAILIFTDFTCMAPISFFAISAAF). Residues 599 to 609 (KVPLITVTNSK) are Extracellular-facing. A helical membrane pass occupies residues 610–631 (VLLVLFYPVNSCANPFLYAVFT). At 632 to 700 (KAFQRDFFLL…QPTPPRVLIQ (69 aa)) the chain is on the cytoplasmic side. S-palmitoyl cysteine attachment occurs at residues C647 and C648.

It belongs to the G-protein coupled receptor 1 family. FSH/LSH/TSH subfamily. In terms of processing, sulfated.

It is found in the cell membrane. In terms of biological role, receptor for lutropin-choriogonadotropic hormone. The activity of this receptor is mediated by G proteins which activate adenylate cyclase. The protein is Lutropin-choriogonadotropic hormone receptor (Lhcgr) of Mus musculus (Mouse).